Reading from the N-terminus, the 742-residue chain is mRNA export factor ICP27 homolog (742 aa).

Residues 1–11 are compositionally biased toward basic and acidic residues; the sequence is MELHSRGRHDA. A disordered region spans residues 1 to 202; sequence MELHSRGRHD…NHHGSSAGPQ (202 aa). A compositionally biased stretch (basic residues) spans 72–85; that stretch reads SHHHRPCVPARRPR. Residues 153–171 are compositionally biased toward basic and acidic residues; that stretch reads KSYDNDDGEPHHHGGDSTH. The segment covering 179 to 202 has biased composition (polar residues); it reads CPTTFGSSHPSSANNHHGSSAGPQ. Residues Cys-387, His-494, Cys-496, and Cys-501 each contribute to the Zn(2+) site. The CHC2-type zinc-finger motif lies at 387–501; sequence CILDHQDGWG…QCHECQNEMC (115 aa). Positions 540-742 are disordered; sequence ASNHATAGGQ…MLCYSDDMDD (203 aa). The span at 578–587 shows a compositional bias: basic and acidic residues; that stretch reads YDKKDREGSH. Residues 614 to 626 are compositionally biased toward acidic residues; the sequence is GELEEDEDSDDAS. A compositionally biased stretch (polar residues) spans 692-703; sequence QSANGNHSTTAT.

The protein belongs to the HHV-1 ICP27 protein family. As to quaternary structure, self-associates and forms high-molecular-mass complexes. Interacts with host DDX39A and DDX39B; these interactions are required for UL69 function in mRNA export. Interacts with host SUPT6H, EIF4A1 and PABPC1. Phosphorylated by UL97 and host CDK1, CDK7 and CD9. Phosphorylation by CDKs impacts on UL69 nuclear localization and activity.

It is found in the virion tegument. The protein localises to the virion. The protein resides in the host nucleus. It localises to the host cytoplasm. Its function is as follows. Immediate early (EI) protein that plays many roles during productive infection including regulation of host cell cycle progression, regulation of viral gene expression or nuclear export of intronless viral RNAs. Acts as a transcriptional transactivator via interaction with the cellular transcription elongation factor SUPT6H and as a nuclear RNA export factor via interaction with UAP56, a component of the cellular mRNA export machinery. This chain is mRNA export factor ICP27 homolog, found in Human cytomegalovirus (strain Merlin) (HHV-5).